The chain runs to 248 residues: Granzyme F (248 aa).

Positions 1-18 (MPPILILLTLLLPLRAGA) are cleaved as a signal peptide. Positions 19 to 20 (EE) are excised as a propeptide. In terms of domain architecture, Peptidase S1 spans 21 to 246 (IIGGHEVKPH…YLPWISRNMK (226 aa)). A disulfide bridge connects residues Cys50 and Cys66. The active-site Charge relay system is His65. The N-linked (GlcNAc...) asparagine glycan is linked to Asn106. The Charge relay system role is filled by Asp109. Disulfide bonds link Cys143–Cys210 and Cys175–Cys189. The N-linked (GlcNAc...) asparagine glycan is linked to Asn154. Ser204 functions as the Charge relay system in the catalytic mechanism. Residue Asn223 is glycosylated (N-linked (GlcNAc...) asparagine).

Belongs to the peptidase S1 family. Granzyme subfamily.

It is found in the cytolytic granule. In terms of biological role, this enzyme is probably necessary for target cell lysis in cell-mediated immune responses. In Mus musculus (Mouse), this protein is Granzyme F (Gzmf).